The chain runs to 258 residues: Tetraspanin-18B (258 aa).

Over 1–25 (MGLGEASARGTSMEGDCLSCIKYLM) the chain is Cytoplasmic. A helical transmembrane segment spans residues 26 to 46 (FVFNFLIFLGGSFLLGVGVWV). Topologically, residues 47 to 61 (VVDPTGFREIVAANP) are extracellular. A helical membrane pass occupies residues 62 to 82 (LLFTGVYIILAMGGMLFLLGF). At 83–94 (LGCCGAIRENKC) the chain is on the cytoplasmic side. Residues 95-115 (LLLFFFMLILIIFLAELAAAI) form a helical membrane-spanning segment. The Extracellular segment spans residues 116-228 (LAFIFREHLT…SAVVDYFEMY (113 aa)). An N-linked (GlcNAc...) asparagine glycan is attached at Asn141. A helical membrane pass occupies residues 229 to 249 (IYVAGALAIVVLTIELFAMVF). Topologically, residues 250–258 (AMCLFRGIQ) are cytoplasmic.

It belongs to the tetraspanin (TM4SF) family.

The protein resides in the membrane. In terms of biological role, may regulate angiogenesis through KDR/VEGFR2 and NOTCH1 pathways. This Danio rerio (Zebrafish) protein is Tetraspanin-18B (tspan18b).